Consider the following 348-residue polypeptide: Phenylalanine--tRNA ligase alpha subunit (348 aa).

Glutamate 262 is a binding site for Mg(2+).

The protein belongs to the class-II aminoacyl-tRNA synthetase family. Phe-tRNA synthetase alpha subunit type 1 subfamily. In terms of assembly, tetramer of two alpha and two beta subunits. Mg(2+) is required as a cofactor.

The protein localises to the cytoplasm. It carries out the reaction tRNA(Phe) + L-phenylalanine + ATP = L-phenylalanyl-tRNA(Phe) + AMP + diphosphate + H(+). The sequence is that of Phenylalanine--tRNA ligase alpha subunit from Streptococcus pneumoniae serotype 2 (strain D39 / NCTC 7466).